A 396-amino-acid chain; its full sequence is MAKAKFERTKPHVNIGTIGHVDHGKTTLTAAITKVLAGKGQAEFKAFDQIDNAPEERERGITIATAHVEYETDKRHYAHVDCPGHADYVKNMITGAAQMDGAILVVSAADGPMPQTREHILLARQVGVPYIVVFLNKADMVDDEELLELVELEIRELLSSYDFPGDDIPIIKGSALKALEGDTGELGEQAIMKLMEAVDSYIPEPVRAIDKPFLMPVEDVFSISGRGTVATGRVERGIVKVGEEVEIVGMKATAKTTVTGVEMFRKLLDEGRAGDNIGALLRGVKREDIERGQVLAKPGSITPHTKFKAEAYILTKEEGGRHTPFFNGYRPQFYFRTTDVTGIVELAAGTEMVMPGDNVAVTVNLITPIAMDEGLRFAIREGGRTVGAGVVSSIIE.

Positions 10-206 (KPHVNIGTIG…AVDSYIPEPV (197 aa)) constitute a tr-type G domain. The segment at 19–26 (GHVDHGKT) is G1. 19 to 26 (GHVDHGKT) provides a ligand contact to GTP. Thr26 contacts Mg(2+). Positions 60–64 (GITIA) are G2. Residues 81–84 (DCPG) are G3. Residues 81–85 (DCPGH) and 136–139 (NKAD) contribute to the GTP site. Positions 136-139 (NKAD) are G4. The segment at 174–176 (SAL) is G5.

This sequence belongs to the TRAFAC class translation factor GTPase superfamily. Classic translation factor GTPase family. EF-Tu/EF-1A subfamily. In terms of assembly, monomer.

Its subcellular location is the cytoplasm. It carries out the reaction GTP + H2O = GDP + phosphate + H(+). GTP hydrolase that promotes the GTP-dependent binding of aminoacyl-tRNA to the A-site of ribosomes during protein biosynthesis. The chain is Elongation factor Tu from Geotalea uraniireducens (strain Rf4) (Geobacter uraniireducens).